Consider the following 333-residue polypeptide: MFYDDDADLTIIQGRKVGVIGYGSQGHAHSLSLRDSGVQVKVGLKEGSKSRAKVSEQGLDVDTPAAVAKWADVIMLLAPDTAQADIFKNDIEPNLSDGDALFFGHGLNIHFGLIKPPAEVTVAMVAPKGPGHLVRRQFVDGKGVPCLIAVDQDPTGKGEALALSYAKAIGGTRAGVIKTTFKDETETDLFGEQAVLCGGTEELVKAGFDVMVESGYPPEMAYFEVLHELKLIVDLMYEGGIARMNYSVSDTAEFGGYLSGPRVIDAGTKDRMREILRDIQNGDFVKKLVANVEGGNKQLEQLRKENVEHPIEVVGKRLRDLMSWVDRPITETA.

The KARI N-terminal Rossmann domain maps to 1 to 179 (MFYDDDADLT…GGTRAGVIKT (179 aa)). Residues 22-25 (YGSQ), lysine 45, serine 48, serine 50, and 80-83 (DTAQ) contribute to the NADP(+) site. Histidine 105 is an active-site residue. Glycine 131 serves as a coordination point for NADP(+). The KARI C-terminal knotted domain occupies 180–325 (TFKDETETDL…KRLRDLMSWV (146 aa)). The Mg(2+) site is built by aspartate 188, glutamate 192, glutamate 224, and glutamate 228. Serine 249 serves as a coordination point for substrate.

This sequence belongs to the ketol-acid reductoisomerase family. It depends on Mg(2+) as a cofactor.

It catalyses the reaction (2R)-2,3-dihydroxy-3-methylbutanoate + NADP(+) = (2S)-2-acetolactate + NADPH + H(+). The catalysed reaction is (2R,3R)-2,3-dihydroxy-3-methylpentanoate + NADP(+) = (S)-2-ethyl-2-hydroxy-3-oxobutanoate + NADPH + H(+). The protein operates within amino-acid biosynthesis; L-isoleucine biosynthesis; L-isoleucine from 2-oxobutanoate: step 2/4. It participates in amino-acid biosynthesis; L-valine biosynthesis; L-valine from pyruvate: step 2/4. Involved in the biosynthesis of branched-chain amino acids (BCAA). Catalyzes an alkyl-migration followed by a ketol-acid reduction of (S)-2-acetolactate (S2AL) to yield (R)-2,3-dihydroxy-isovalerate. In the isomerase reaction, S2AL is rearranged via a Mg-dependent methyl migration to produce 3-hydroxy-3-methyl-2-ketobutyrate (HMKB). In the reductase reaction, this 2-ketoacid undergoes a metal-dependent reduction by NADPH to yield (R)-2,3-dihydroxy-isovalerate. In Mycobacterium avium, this protein is Ketol-acid reductoisomerase (NADP(+)).